Here is a 617-residue protein sequence, read N- to C-terminus: Phosphatidylinositol-3,5-bisphosphate 3-phosphatase MTMR6 (617 aa).

Residues 1 to 101 (MEHIRTTKVE…YNSLLQLSKQ (101 aa)) enclose the GRAM domain. Positions 2 to 141 (EHIRTTKVEQ…AEYERMGVPN (140 aa)) are interaction with RAB1B. Residue Tyr-108 is modified to Phosphotyrosine. The Myotubularin phosphatase domain occupies 124 to 499 (GWQLIDLAAE…FNFKFWRNMY (376 aa)). Asn-248, Asn-273, and Ile-274 together coordinate a 1,2-diacyl-sn-glycero-3-phospho-(1D-myo-inositol-3,5-bisphosphate). A 1,2-diacyl-sn-glycero-3-phospho-(1D-myo-inositol-3-phosphate)-binding residues include Asn-248, Asn-273, and Ile-274. Cys-336 functions as the Phosphocysteine intermediate in the catalytic mechanism. The a 1,2-diacyl-sn-glycero-3-phospho-(1D-myo-inositol-3,5-bisphosphate) site is built by Ser-337, Asp-338, Gly-339, Trp-340, Asp-341, Arg-342, Lys-378, and Arg-382. Residues Ser-337, Asp-338, Gly-339, Trp-340, Asp-341, and Arg-342 each contribute to the a 1,2-diacyl-sn-glycero-3-phospho-(1D-myo-inositol-3-phosphate) site. Arg-382 lines the a 1,2-diacyl-sn-glycero-3-phospho-(1D-myo-inositol-3-phosphate) pocket. Phosphoserine is present on residues Ser-557, Ser-585, and Ser-607.

Belongs to the protein-tyrosine phosphatase family. Non-receptor class myotubularin subfamily. As to quaternary structure, homodimer. Heterodimer (via C-terminus) with MTMR9 (via C-terminus). Interacts with ALKBH4. Interacts with KCNN4. Interacts (via GRAM domain) with RAB1B (in GDP-bound form); the interaction regulates MTMR6 recruitment to the endoplasmic reticulum-Golgi intermediate compartment. Isoform 1: Ubiquitously expressed including in heart, brain, spleen, lung, liver, muscle, kidney and testis (at protein level). Isoform 2: Expressed in testis (at protein level).

Its subcellular location is the cytoplasm. It is found in the endoplasmic reticulum-Golgi intermediate compartment. The protein localises to the cell projection. The protein resides in the ruffle membrane. It localises to the endoplasmic reticulum. The catalysed reaction is a 1,2-diacyl-sn-glycero-3-phospho-(1D-myo-inositol-3,5-bisphosphate) + H2O = a 1,2-diacyl-sn-glycero-3-phospho-(1D-myo-inositol-5-phosphate) + phosphate. It carries out the reaction a 1,2-diacyl-sn-glycero-3-phospho-(1D-myo-inositol-3-phosphate) + H2O = a 1,2-diacyl-sn-glycero-3-phospho-(1D-myo-inositol) + phosphate. It catalyses the reaction 1,2-dioctanoyl-sn-glycero-3-phospho-(1D-myo-inositol-3,5-bisphosphate) + H2O = 1,2-dioctanoyl-sn-glycero-3-phospho-(1D-myo-inositol-5-phosphate) + phosphate. The enzyme catalyses 1,2-dioctanoyl-sn-glycero-3-phospho-(1-D-myo-inositol-3-phosphate) + H2O = 1,2-dioctanoyl-sn-glycero-3-phospho-(1D-myo-inositol) + phosphate. With respect to regulation, allosterically activated by phosphatidylserine and/or phosphatidylinositol 4-phosphate (PtdIns(4)P), and phosphatidylinositol 5-phosphate (PtdIns(5)P). Interaction with MTMR9 increases catalytic activity towards phosphatidylinositol 3,5-bisphosphate. In terms of biological role, lipid phosphatase that specifically dephosphorylates the D-3 position of phosphatidylinositol 3-phosphate and phosphatidylinositol 3,5-bisphosphate, generating phosphatidylinositol and phosphatidylinositol 5-phosphate. Binds with high affinity to phosphatidylinositol 3,5-bisphosphate (PtdIns(3,5)P2) but also to phosphatidylinositol 3-phosphate (PtdIns(3)P), phosphatidylinositol 4-phosphate (PtdIns(4)P), and phosphatidylinositol 5-phosphate (PtdIns(5)P), phosphatidic acid and phosphatidylserine. Negatively regulates ER-Golgi protein transport. Probably in association with MTMR9, plays a role in the late stages of macropinocytosis by dephosphorylating phosphatidylinositol 3-phosphate in membrane ruffles. Acts as a negative regulator of KCNN4/KCa3.1 channel activity in CD4(+) T-cells possibly by decreasing intracellular levels of phosphatidylinositol 3-phosphate. Negatively regulates proliferation of reactivated CD4(+) T-cells. In complex with MTMR9, negatively regulates DNA damage-induced apoptosis. The formation of the MTMR6-MTMR9 complex stabilizes both MTMR6 and MTMR9 protein levels. This is Phosphatidylinositol-3,5-bisphosphate 3-phosphatase MTMR6 from Mus musculus (Mouse).